The primary structure comprises 214 residues: uncharacterized protein (214 aa).

The signal sequence occupies residues 1–17 (MLKKIIILFLGVFVLSG). Cys18 carries N-palmitoyl cysteine lipidation. A lipid anchor (S-diacylglycerol cysteine) is attached at Cys18. Acidic residues predominate over residues 64-77 (DNLDDPEDDDDDYD). Disordered regions lie at residues 64 to 83 (DNLD…LRGE), 106 to 138 (YKAE…KERK), and 166 to 197 (TANQ…SKVK). Positions 120-162 (TLSKANKKVRKDNTDKERKMQEELDQIKAMLRETKRDISKYTC) form a coiled coil.

Its subcellular location is the cell membrane. This is an uncharacterized protein from Rickettsia bellii (strain RML369-C).